The sequence spans 580 residues: Cyclin-K (580 aa).

The disordered stretch occupies residues 262–580 (KQQMPHHTPH…GGLGRAAWMR (319 aa)). Low complexity-rich tracts occupy residues 263 to 277 (QQMP…QQPP) and 285 to 321 (VPQV…QQPK). Residues Ser-324, Ser-328, Ser-329, and Ser-340 each carry the phosphoserine modification. The segment covering 377-386 (PLAAALGEAE) has biased composition (low complexity). Over residues 400–426 (QIPPPAHPAPVHQPPPLPHRPPPPPPS) the composition is skewed to pro residues. A compositionally biased stretch (low complexity) spans 427 to 444 (SYMTGMSTTSSYMSGEGY). Residues 477-568 (VYPPNPPPPP…PPPIPPPGMP (92 aa)) show a composition bias toward pro residues.

It belongs to the cyclin family. Cyclin C subfamily. As to quaternary structure, regulatory subunit of cyclin-dependent kinases. Identified in a complex with a kinase and the RNA polymerase II holoenzyme. Interacts with POLR2A. Interacts with CDK12 and CDK13. Interacts with CDK9 according to PubMed:10574912; does not interact with CDK9 according to PubMed:22012619. (Microbial infection) Interacts with human herpes virus 1 (HHV-1) transcriptional regulator ICP22. Widely expressed. Highest levels in testis.

Its subcellular location is the nucleus. Functionally, regulatory subunit of cyclin-dependent kinases that mediates activation of target kinases. Plays a role in transcriptional regulation via its role in regulating the phosphorylation of the C-terminal domain (CTD) of the large subunit of RNA polymerase II (POLR2A). This chain is Cyclin-K (CCNK), found in Homo sapiens (Human).